The primary structure comprises 528 residues: MEDGRSTFKVIIIGAGVTGLTLAHCLAKACIDYVLLDKGIVAPSFGTTITLQPHGCRILHQLGCLDAVLASCDVMSGAQCRDPSGKTFASNDFFRVVKKFTGYDTRTLDRKVFLRTMYEQLPDQSRVHERARVEEIIEDNEKTRVVLQDGQEFVGNLVIGTDGVHSKVREIMWDNANTAKPGMITVEEKRAMVTQYNAIVMACSPVPGLGSHDMEVTSNDKFSFLLLCQPDWISIIVHNKLPEDQQCTWPTRRRYTESDMEALVSRILECPITETVVFGELWKRRLKAQMISLEEGVLEHWFFGRIVLAGDAIHKVTPNSALGGNTAMEDAVTVANTLHTLLAAHPNKKPSTVELQDAFRDNYQNARMDRVRAIVKVGGDLTRQQAYDGWKRYLIQRWLTPIVGLDTLAKNIAGLCVTAPKLSYIDFEEKRGMLNWQDTVAADKELEMHHENVGGVRAEYHKSKWLLTSADWSGGFEAVFPQILGVLMVMWSSVWLFHLAFSRHCISGFGGEVWRTFGADNETSCVAK.

An N-terminal signal peptide occupies residues M1–A23. D37, R110, D311, and G324 together coordinate FAD. A helical membrane pass occupies residues V479–L499. The N-linked (GlcNAc...) asparagine glycan is linked to N521.

Belongs to the paxM FAD-dependent monooxygenase family. FAD is required as a cofactor.

It localises to the membrane. Its pathway is polyketide biosynthesis. Its function is as follows. FAD-dependent monooxygenase; part of the gene cluster that mediates the biosynthesis of depudecin, a highly oxidized eleven-carbon linear polyketide that acts as a histone deacetylase (HDAC) inhibitor and makes a small contribution to pathogenesis. The reducing polyketide synthase DEP5 is the central enzyme in depudecin biosynthesis by yielding the backbone polyketide chain. The monooxygenases DEP2 and DEP4, as well as the uncharacterized protein DEP1, then act as tailoring enzymes to modify the intermediate polyketide chain into depudecin. This chain is FAD-dependent monooxygenase DEP2, found in Alternaria brassicicola (Dark leaf spot agent).